Reading from the N-terminus, the 153-residue chain is Pro-corazonin (153 aa).

Positions 1-20 are cleaved as a signal peptide; sequence MLRLLLLPLFLFTLSMACMG. At Gln21 the chain carries Pyrrolidone carboxylic acid. Asn31 is modified (asparagine amide). Positions 64-153 are excised as a propeptide; sequence LERCLLQLQH…AVEPNDYGKH (90 aa).

The protein belongs to the corazonin family. As to expression, expression is restricted to 24 neurons in the larval CNS (8 in the brain and 16 in the ventral nerve cord) and 12-16 neurons in the pars lateralis of the adult brain.

It localises to the secreted. Functionally, cardioactive peptide. Corazonin is probably involved in the physiological regulation of the heart beat. Clock (Clk) and cycle (cyc) proteins negatively regulate Crz transcription in a cell-specific manner. The protein is Pro-corazonin (Crz) of Drosophila virilis (Fruit fly).